The chain runs to 229 residues: Heptaprenylglyceryl phosphate synthase (229 aa).

Lys12 lines the sn-glycerol 1-phosphate pocket. Mg(2+)-binding residues include Asp14 and Ser40. Residues Tyr159–Gly164, Gly189, and Gly209–Asn210 each bind sn-glycerol 1-phosphate.

The protein belongs to the GGGP/HepGP synthase family. Group I subfamily. Homodimer. Mg(2+) is required as a cofactor.

It carries out the reaction sn-glycerol 1-phosphate + all-trans-heptaprenyl diphosphate = 3-heptaprenyl-sn-glycero-1-phosphate + diphosphate. The protein operates within membrane lipid metabolism; glycerophospholipid metabolism. Functionally, prenyltransferase that catalyzes in vivo the transfer of the heptaprenyl moiety of heptaprenyl pyrophosphate (HepPP; 35 carbon atoms) to the C3 hydroxyl of sn-glycerol-1-phosphate (G1P), producing heptaprenylglyceryl phosphate (HepGP). This reaction is an ether-bond-formation step in the biosynthesis of archaea-type G1P-based membrane lipids found in Bacillales. This Bacillus cytotoxicus (strain DSM 22905 / CIP 110041 / 391-98 / NVH 391-98) protein is Heptaprenylglyceryl phosphate synthase.